The chain runs to 344 residues: Galactoside alpha-(1,2)-fucosyltransferase 2 (344 aa).

Residues 1 to 7 are Cytoplasmic-facing; that stretch reads MFSTQTF. A helical; Signal-anchor for type II membrane protein transmembrane segment spans residues 8-28; that stretch reads FFFPTAPFILFVFTASTIFHL. The Lumenal portion of the chain corresponds to 29–344; sequence HQRLEKMQPT…PADLSPLLKH (316 aa). Asn-189, Asn-255, Asn-283, and Asn-309 each carry an N-linked (GlcNAc...) asparagine glycan.

As to expression, expressed in brain, heart, lung, intestin and kidney.

Its subcellular location is the golgi apparatus. The protein localises to the golgi stack membrane. It catalyses the reaction a beta-D-galactosyl-(1-&gt;3)-N-acetyl-beta-D-glucosaminyl derivative + GDP-beta-L-fucose = an alpha-L-Fuc-(1-&gt;2)-beta-D-Gal-(1-&gt;3)-beta-D-GlcNAc derivative + GDP + H(+). It carries out the reaction a beta-D-galactosyl-(1-&gt;4)-N-acetyl-beta-D-glucosaminyl derivative + GDP-beta-L-fucose = an alpha-L-Fuc-(1-&gt;2)-beta-D-Gal-(1-&gt;4)-beta-D-GlcNAc derivative + GDP + H(+). The catalysed reaction is a ganglioside GM1 + GDP-beta-L-fucose = a ganglioside Fuc-GM1 + GDP + H(+). The enzyme catalyses a neolactoside nLc4Cer + GDP-beta-L-fucose = a neolactoside IV(2)-alpha-Fuc-nLc4Cer + GDP + H(+). It catalyses the reaction a neolactoside nLc4Cer(d18:1(4E)) + GDP-beta-L-fucose = a neolactoside IV(2)-alpha-Fuc-nLc4Cer(d18:1(4E)) + GDP + H(+). It carries out the reaction a ganglioside GA1 + GDP-beta-L-fucose = a ganglioside Fuc-GA1 + GDP + H(+). The catalysed reaction is Lc4Cer + GDP-beta-L-fucose = alpha-L-fucosyl-(1-&gt;2)-beta-D-galactosyl-(1-&gt;3)-N-acetyl-beta-D-glucosaminyl-(1-&gt;3)-beta-D-galactosyl-(1-&gt;4)-beta-D-glucosyl-(1&lt;-&gt;1')-ceramide + GDP + H(+). The enzyme catalyses a beta-D-Gal-(1-&gt;3)-beta-D-GlcNAc-(1-&gt;3)-beta-D-Gal-(1-&gt;4)-beta-D-Glc-(1&lt;-&gt;1')-Cer(d18:1(4E)) + GDP-beta-L-fucose = alpha-L-fucosyl-(1-&gt;2)- beta-D-galactosyl-(1-&gt;3)-N-acetyl-beta-D-glucosaminyl-(1-&gt;3)-beta-D-galactosyl-(1-&gt;4)-beta-D-glucosyl-(1&lt;-&gt;1')-N-acylsphing-4-enine + GDP + H(+). It catalyses the reaction a ganglioside GD1b + GDP-beta-L-fucose = a ganglioside Fuc-GD1b + GDP + H(+). It carries out the reaction a ganglioside GM1 (d18:1(4E)) + GDP-beta-L-fucose = a ganglioside Fuc-GM1 (d18:1(4E)) + GDP + H(+). The catalysed reaction is a globoside GalGb4Cer (d18:1(4E)) + GDP-beta-L-fucose = a globoside Globo-H (d18:1(4E)) + GDP + H(+). The enzyme catalyses a lactoside III(4)-a-Fuc-Lc4Cer + GDP-beta-L-fucose = a lactoside IV(2),III(4)-a-[Fuc]2-Lc4Cer + GDP + H(+). It catalyses the reaction beta-D-galactosyl-(1-&gt;3)-N-acetyl-D-galactosamine + GDP-beta-L-fucose = alpha-L-fucosyl-(1-&gt;2)-beta-D-galactosyl-(1-&gt;3)-N-acetyl-D-galactosamine + GDP + H(+). Its pathway is protein modification; protein glycosylation. Functionally, catalyzes the transfer of L-fucose, from a guanosine diphosphate-beta-L-fucose, to the terminal galactose on both O- and N-linked glycans chains of cell surface glycoproteins and glycolipids and the resulting epitope regulates several processes such as cell-cell interaction including host-microbe interaction, cell surface expression and cell proliferation. Preferentially fucosylates gangliosides GA1 and GM1 in the antrum, cecum and colon and in the female reproductive organs. Fucosylated host glycoproteins or glycolipids mediate interaction with intestinal microbiota influencing its composition. Creates a soluble precursor oligosaccharide FuC-alpha ((1,2)Galbeta-) called the H antigen which is an essential substrate for the final step in the soluble ABO blood group antigen synthesis pathway. This is Galactoside alpha-(1,2)-fucosyltransferase 2 from Bos taurus (Bovine).